A 297-amino-acid chain; its full sequence is Nucleotide-binding protein Bphyt_0592 (297 aa).

8 to 15 (GISGSGKS) contributes to the ATP binding site. Residue 57–60 (DARS) coordinates GTP.

The protein belongs to the RapZ-like family.

Its function is as follows. Displays ATPase and GTPase activities. The protein is Nucleotide-binding protein Bphyt_0592 of Paraburkholderia phytofirmans (strain DSM 17436 / LMG 22146 / PsJN) (Burkholderia phytofirmans).